A 1035-amino-acid polypeptide reads, in one-letter code: MREFSEIIKARDWENQEVTHQHVVQAHAPLHAFHSKQAALDNQASEFQQLLNGQWRFQLFAKPEAVPNHCINIDFDDSAWSDITVPSNWQLQGYDKPIYTNVKYPFADNPPFVPADNPTGVYRLNFTLPTAWKERKNTVIFDGVNSAFHLWCNGIWVGYSQDSRLPAEFDLSCHLQAGDNQLTVMVLRWSDGSYLEDQDMWWLSGIFRDVCLLSKPLISIRDITVSTELDACFNHGSINVVTQLSEQSSQYTAQVQLFDAQLQPVTKLVGAPFGERMIDEKGPANDRAEHKIAVPSPHKWSSESPYLYRVVISLVDNEGQVVDSEAYQVGFRVVEMSNGQLKLNGEALLIRGVNRHEHHPEKGHAISYEDMLVDIKLLKQNNFNAVRTAHYPNHPLWYELCDQYGLYVVDEANLETHGQFPMSRLSNDLSWLNAYMRRMTRMVERDKNHPSIIIWSLGNESGLGHHHHAMYQWTKRRDPTRPVQYEGGGADTAATDIIVPMYARVNKDITLPNAPDVVPKMAIKKWLSMPNEQRPLILCEYAHAMGNSLGSFDKYWQAFREYPRLQGGFIWDWVDQGLTKIDDNGDNYWAYGGDFGDQINDRQFCINGLVFPDRSLHPTVYEAKKAQQFYQFSLVDGDQLKVKIDSENLFIESMDETLCWSVTEAGYVIASGEMELHVTAQSSKILTLLESYPEQKIGCDYFLNIEIVLNKDKPWATKGFVVATEQVALASIAQLTNVPLIESGAPRLSEDKNKITVAGTGSGAEFELEIDKQQGVISQWLVRGENKILQGPKDNFFRAPLDNDIGTSEADCIDPNAWVTQWDTAGIANLVPHCIAIEAVTLARSVLVKVEFGHYVENKLLISSHWQYTINNQGEVQIDVNVNLAKSLSPLPRIGLELILPDSEKPVNWFGRGPHENYPDRILSAHIARHCCSIEEMHTPYIFPSENGLRCDVKDAIVGDLTVSGDFHLAVSRYSQMNIAQAKHVNDLINDHQLYVRLDAFHMGVGGDDSWSPSVHDEFLLNKEHYHYQMILAFN.

Substrate is bound by residues Asn101 and Asp199. Na(+) is bound at residue Asp199. Residues Glu415, His417, and Glu460 each contribute to the Mg(2+) site. Substrate is bound by residues Glu460 and 540 to 543; that span reads EYAH. Glu460 acts as the Proton donor in catalysis. Glu540 functions as the Nucleophile in the catalytic mechanism. Residue Asn600 participates in Mg(2+) binding. Residues Phe604 and Asn607 each coordinate Na(+). Asn607 and Trp1011 together coordinate substrate.

Belongs to the glycosyl hydrolase 2 family. In terms of assembly, homotetramer. Mg(2+) serves as cofactor. It depends on Na(+) as a cofactor.

It carries out the reaction Hydrolysis of terminal non-reducing beta-D-galactose residues in beta-D-galactosides.. This Psychromonas ingrahamii (strain DSM 17664 / CCUG 51855 / 37) protein is Beta-galactosidase.